The following is an 86-amino-acid chain: Collagen alpha-1(XII) chain (86 aa).

Residues 1–12 (NQPGPPGPPGPP) show a composition bias toward pro residues. The disordered stretch occupies residues 1–86 (NQPGPPGPPG…PGRPGDSGIR (86 aa)). Residues proline 6, proline 9, proline 12, proline 18, proline 24, proline 27, proline 30, proline 42, proline 51, proline 54, proline 65, proline 74, proline 77, and proline 80 each carry the hydroxyproline modification. Positions 16–25 (GEPGPGGRPG) are enriched in gly residues. A compositionally biased stretch (low complexity) spans 35–50 (PQGERGLPGEXGERGL). The span at 57–71 (QGESRTGPPGSTGSR) shows a compositional bias: low complexity.

It belongs to the fibril-associated collagens with interrupted helices (FACIT) family. As to quaternary structure, trimer of identical chains each containing 190 kDa of non-triple-helical sequences. Post-translationally, the triple-helical tail is stabilized by disulfide bonds at each end. Prolines at the third position of the tripeptide repeating unit (G-X-Y) are hydroxylated in some or all of the chains.

The protein localises to the secreted. It is found in the extracellular space. It localises to the extracellular matrix. Functionally, type XII collagen interacts with type I collagen-containing fibrils, the COL1 domain could be associated with the surface of the fibrils, and the COL2 and NC3 domains may be localized in the perifibrillar matrix. This is Collagen alpha-1(XII) chain (COL12A1) from Bos taurus (Bovine).